The sequence spans 523 residues: Cytoplasmic dynein 1 light intermediate chain 1 (523 aa).

Residues 1 to 25 are disordered; that stretch reads MAAVGRVGSFGSSPPGLASTYASGP. 74–81 contributes to the ATP binding site; it reads GEDGAGKT. Disordered regions lie at residues 200–219, 387–434, and 457–523; these read PGEDFPASPQRRTTGAQEDR, PPTA…DPNM, and GSPG…GEAS. The residue at position 207 (serine 207) is a Phosphoserine. Residue threonine 213 is modified to Phosphothreonine. Phosphoserine is present on residues serine 398 and serine 405. Position 408 is a phosphothreonine (threonine 408). 4 positions are modified to phosphoserine: serine 412, serine 419, serine 421, and serine 427. The segment covering 412–421 has biased composition (low complexity); sequence SVSSNVASVS. Gly residues predominate over residues 458–473; sequence SPGGPGVGGSPGGGAA. The span at 474–485 shows a compositional bias: low complexity; that stretch reads GASPSLPPSAKK. 2 positions are modified to phosphoserine: serine 486 and serine 510. Positions 506 to 523 are enriched in low complexity; sequence PASVSPTTPTSPTEGEAS. Phosphothreonine is present on residues threonine 512, threonine 513, and threonine 515. Serine 516 carries the phosphoserine modification.

This sequence belongs to the dynein light intermediate chain family. In terms of assembly, homodimer. The cytoplasmic dynein 1 complex consists of two catalytic heavy chains (HCs) and a number of non-catalytic subunits presented by intermediate chains (ICs), light intermediate chains (LICs) and light chains (LCs); the composition seems to vary in respect to the IC, LIC and LC composition. The heavy chain homodimer serves as a scaffold for the probable homodimeric assembly of the respective non-catalytic subunits. The ICs and LICs bind directly to the HC dimer and the LCs assemble on the IC dimer. Self-associates. Interacts with DYNC1H1; DYNC1LI1 and DYNC1LI2 bind mutually exclusive to DYNC1H1. Interacts with PCNT. Forms a complex with RAB11FIP3 and RAB11A1; the interaction between DYNC1LI1 and RAB11FIP3 is direct and induces DYNC1LI1 localization onto endosomal membrane; the complex regulates endocytic trafficking. Interacts with RUFY3. Post-translationally, phosphorylated during mitosis but not in interphase.

It is found in the cytoplasm. The protein localises to the chromosome. The protein resides in the centromere. It localises to the kinetochore. Its subcellular location is the cytoskeleton. It is found in the spindle pole. The protein localises to the recycling endosome membrane. Its function is as follows. Acts as one of several non-catalytic accessory components of the cytoplasmic dynein 1 complex that are thought to be involved in linking dynein to cargos and to adapter proteins that regulate dynein function. Cytoplasmic dynein 1 acts as a motor for the intracellular retrograde motility of vesicles and organelles along microtubules. May play a role in binding dynein to membranous organelles or chromosomes. Probably involved in the microtubule-dependent transport of pericentrin. Is required for progress through the spindle assembly checkpoint. The phosphorylated form appears to be involved in the selective removal of MAD1L1 and MAD1L2 but not BUB1B from kinetochores. Forms a functional Rab11/RAB11FIP3/dynein complex onto endosomal membrane that regulates the movement of peripheral sorting endosomes (SE) along microtubule tracks toward the microtubule organizing center/centrosome, generating the endosomal recycling compartment (ERC). This Mus musculus (Mouse) protein is Cytoplasmic dynein 1 light intermediate chain 1 (Dync1li1).